The sequence spans 392 residues: Phospho-N-acetylmuramoyl-pentapeptide-transferase (392 aa).

10 helical membrane passes run 28-48 (RALM…PFVI), 76-96 (TMGG…WFDL), 100-120 (FVWI…VDDW), 137-157 (YLWQ…SISE), 193-213 (ISYP…IVGS), 225-245 (GLAI…AYVT), 262-282 (SGEL…FLWF), 289-309 (VFMG…IAVI), 314-334 (IVLA…MLQV), and 369-389 (QVVV…LSTL).

The protein belongs to the glycosyltransferase 4 family. MraY subfamily. Requires Mg(2+) as cofactor.

It is found in the cell inner membrane. The enzyme catalyses UDP-N-acetyl-alpha-D-muramoyl-L-alanyl-gamma-D-glutamyl-meso-2,6-diaminopimeloyl-D-alanyl-D-alanine + di-trans,octa-cis-undecaprenyl phosphate = di-trans,octa-cis-undecaprenyl diphospho-N-acetyl-alpha-D-muramoyl-L-alanyl-D-glutamyl-meso-2,6-diaminopimeloyl-D-alanyl-D-alanine + UMP. It functions in the pathway cell wall biogenesis; peptidoglycan biosynthesis. Functionally, catalyzes the initial step of the lipid cycle reactions in the biosynthesis of the cell wall peptidoglycan: transfers peptidoglycan precursor phospho-MurNAc-pentapeptide from UDP-MurNAc-pentapeptide onto the lipid carrier undecaprenyl phosphate, yielding undecaprenyl-pyrophosphoryl-MurNAc-pentapeptide, known as lipid I. This chain is Phospho-N-acetylmuramoyl-pentapeptide-transferase, found in Polaromonas naphthalenivorans (strain CJ2).